Here is a 654-residue protein sequence, read N- to C-terminus: Acetyl-coenzyme A synthetase (654 aa).

Residues 190–193 (RGGK) and Thr-313 each bind CoA. Residues 389–391 (GEP), 413–418 (DTWWQT), Asp-504, and Arg-519 each bind ATP. Position 527 (Ser-527) interacts with CoA. Residue Arg-530 coordinates ATP. 2 residues coordinate Mg(2+): Val-541 and Val-546. N6-acetyllysine is present on Lys-613.

It belongs to the ATP-dependent AMP-binding enzyme family. The cofactor is Mg(2+). In terms of processing, acetylated. Deacetylation by the SIR2-homolog deacetylase activates the enzyme.

The enzyme catalyses acetate + ATP + CoA = acetyl-CoA + AMP + diphosphate. Catalyzes the conversion of acetate into acetyl-CoA (AcCoA), an essential intermediate at the junction of anabolic and catabolic pathways. AcsA undergoes a two-step reaction. In the first half reaction, AcsA combines acetate with ATP to form acetyl-adenylate (AcAMP) intermediate. In the second half reaction, it can then transfer the acetyl group from AcAMP to the sulfhydryl group of CoA, forming the product AcCoA. In Leptospira borgpetersenii serovar Hardjo-bovis (strain L550), this protein is Acetyl-coenzyme A synthetase.